The following is a 124-amino-acid chain: MQKKLVVEKVEKRDERLWLICDHPPFSLEQARPKNHMLVDSDNIAFIYILETDEDFIYVAIPSEFWMDIKQVLTDGTPIFLQSGTIEMELTHFKEELTYLIENIDGNANYGEQMEQAVKEIFLT.

The protein belongs to the UPF0738 family.

This is UPF0738 protein GWCH70_0774 from Geobacillus sp. (strain WCH70).